We begin with the raw amino-acid sequence, 191 residues long: Guanylate kinase (191 aa).

The 179-residue stretch at 6-184 (GLIIILSSPS…TIQQIHTIIL (179 aa)) folds into the Guanylate kinase-like domain. 13–20 (SPSGAGKS) is an ATP binding site.

This sequence belongs to the guanylate kinase family.

Its subcellular location is the cytoplasm. The enzyme catalyses GMP + ATP = GDP + ADP. Essential for recycling GMP and indirectly, cGMP. The sequence is that of Guanylate kinase from Rickettsia bellii (strain RML369-C).